Consider the following 159-residue polypeptide: SsrA-binding protein (159 aa).

Residues 137-159 form a disordered region; sequence KRQTEKERDWEREKQRLFQRDQR.

It belongs to the SmpB family.

The protein resides in the cytoplasm. Required for rescue of stalled ribosomes mediated by trans-translation. Binds to transfer-messenger RNA (tmRNA), required for stable association of tmRNA with ribosomes. tmRNA and SmpB together mimic tRNA shape, replacing the anticodon stem-loop with SmpB. tmRNA is encoded by the ssrA gene; the 2 termini fold to resemble tRNA(Ala) and it encodes a 'tag peptide', a short internal open reading frame. During trans-translation Ala-aminoacylated tmRNA acts like a tRNA, entering the A-site of stalled ribosomes, displacing the stalled mRNA. The ribosome then switches to translate the ORF on the tmRNA; the nascent peptide is terminated with the 'tag peptide' encoded by the tmRNA and targeted for degradation. The ribosome is freed to recommence translation, which seems to be the essential function of trans-translation. This chain is SsrA-binding protein, found in Cellvibrio japonicus (strain Ueda107) (Pseudomonas fluorescens subsp. cellulosa).